Consider the following 406-residue polypeptide: Betaine--homocysteine S-methyltransferase 1 (406 aa).

Residues 11 to 314 form the Hcy-binding domain; sequence KGILERLNAG…YHIRAIAEEL (304 aa). N6-succinyllysine occurs at positions 40, 93, and 98. Cys-217 is a binding site for Zn(2+). 2 positions are modified to N6-succinyllysine: Lys-232 and Lys-241. Residues Cys-299 and Cys-300 each coordinate Zn(2+). Ser-330 carries the phosphoserine modification. Lys-340 and Lys-377 each carry N6-succinyllysine.

In terms of assembly, homotetramer. Zn(2+) serves as cofactor.

Its subcellular location is the cytoplasm. The protein localises to the cytosol. The protein resides in the nucleus. The catalysed reaction is L-homocysteine + glycine betaine = N,N-dimethylglycine + L-methionine. The protein operates within amine and polyamine degradation; betaine degradation; sarcosine from betaine: step 1/2. It participates in amino-acid biosynthesis; L-methionine biosynthesis via de novo pathway; L-methionine from L-homocysteine (BhmT route): step 1/1. Functionally, involved in the regulation of homocysteine metabolism. Converts betaine and homocysteine to dimethylglycine and methionine, respectively. This reaction is also required for the irreversible oxidation of choline. The protein is Betaine--homocysteine S-methyltransferase 1 (BHMT) of Pongo abelii (Sumatran orangutan).